The sequence spans 485 residues: UDP-N-acetylmuramoyl-L-alanyl-D-glutamate--2,6-diaminopimelate ligase (485 aa).

Position 30 (serine 30) interacts with UDP-N-acetyl-alpha-D-muramoyl-L-alanyl-D-glutamate. 113–119 (GTNGKTT) is a binding site for ATP. UDP-N-acetyl-alpha-D-muramoyl-L-alanyl-D-glutamate-binding positions include 155–156 (TT), serine 182, and arginine 190. Lysine 222 bears the N6-carboxylysine mark. Meso-2,6-diaminopimelate is bound by residues arginine 381, 405–408 (DNPR), glycine 455, and glutamate 459. Residues 405 to 408 (DNPR) carry the Meso-diaminopimelate recognition motif motif.

It belongs to the MurCDEF family. MurE subfamily. Mg(2+) serves as cofactor. Carboxylation is probably crucial for Mg(2+) binding and, consequently, for the gamma-phosphate positioning of ATP.

The protein resides in the cytoplasm. The enzyme catalyses UDP-N-acetyl-alpha-D-muramoyl-L-alanyl-D-glutamate + meso-2,6-diaminopimelate + ATP = UDP-N-acetyl-alpha-D-muramoyl-L-alanyl-gamma-D-glutamyl-meso-2,6-diaminopimelate + ADP + phosphate + H(+). Its pathway is cell wall biogenesis; peptidoglycan biosynthesis. Its function is as follows. Catalyzes the addition of meso-diaminopimelic acid to the nucleotide precursor UDP-N-acetylmuramoyl-L-alanyl-D-glutamate (UMAG) in the biosynthesis of bacterial cell-wall peptidoglycan. The chain is UDP-N-acetylmuramoyl-L-alanyl-D-glutamate--2,6-diaminopimelate ligase from Clostridium tetani (strain Massachusetts / E88).